The primary structure comprises 443 residues: Putative phosphoribosyl transferase MT0597 (443 aa).

The protein in the N-terminal section; belongs to the purine/pyrimidine phosphoribosyltransferase family. This sequence in the C-terminal section; belongs to the dienelactone hydrolase family.

This chain is Putative phosphoribosyl transferase MT0597, found in Mycobacterium tuberculosis (strain CDC 1551 / Oshkosh).